We begin with the raw amino-acid sequence, 559 residues long: Small ribosomal subunit protein bS1 (559 aa).

S1 motif domains are found at residues 21–87 (GAII…LSRE), 105–171 (DEVV…VSRR), 192–260 (GQQV…LGLK), 277–347 (GTRV…LGIK), 364–434 (GDRI…LGIK), and 451–520 (GSIV…LSVK).

Belongs to the bacterial ribosomal protein bS1 family.

Functionally, binds mRNA; thus facilitating recognition of the initiation point. It is needed to translate mRNA with a short Shine-Dalgarno (SD) purine-rich sequence. In Pseudomonas aeruginosa (strain ATCC 15692 / DSM 22644 / CIP 104116 / JCM 14847 / LMG 12228 / 1C / PRS 101 / PAO1), this protein is Small ribosomal subunit protein bS1 (rpsA).